The chain runs to 230 residues: UPF0173 metal-dependent hydrolase TM1040_1920 (230 aa).

Belongs to the UPF0173 family.

The chain is UPF0173 metal-dependent hydrolase TM1040_1920 from Ruegeria sp. (strain TM1040) (Silicibacter sp.).